We begin with the raw amino-acid sequence, 128 residues long: Flagellar assembly factor FliW (128 aa).

Belongs to the FliW family. Interacts with translational regulator CsrA and flagellin(s).

The protein resides in the cytoplasm. Its function is as follows. Acts as an anti-CsrA protein, binds CsrA and prevents it from repressing translation of its target genes, one of which is flagellin. Binds to flagellin and participates in the assembly of the flagellum. The chain is Flagellar assembly factor FliW from Campylobacter fetus subsp. fetus (strain 82-40).